Consider the following 347-residue polypeptide: Ribosomal RNA large subunit methyltransferase M (347 aa).

S-adenosyl-L-methionine-binding positions include Ser-184, 217–220 (APGG), Asp-236, Asp-256, and Asp-272. Lys-301 acts as the Proton acceptor in catalysis.

The protein belongs to the class I-like SAM-binding methyltransferase superfamily. RNA methyltransferase RlmE family. RlmM subfamily. As to quaternary structure, monomer.

It is found in the cytoplasm. The enzyme catalyses cytidine(2498) in 23S rRNA + S-adenosyl-L-methionine = 2'-O-methylcytidine(2498) in 23S rRNA + S-adenosyl-L-homocysteine + H(+). Catalyzes the 2'-O-methylation at nucleotide C2498 in 23S rRNA. The protein is Ribosomal RNA large subunit methyltransferase M of Xanthomonas campestris pv. campestris (strain 8004).